The sequence spans 138 residues: Transcription factor Atoh7-b (138 aa).

Positions 33–85 (KRRLAANARERRRMQGLNTAFDSLRKVVPQWGEDKKLSKYETLQMALSYIMAL) constitute a bHLH domain.

The protein localises to the nucleus. It is found in the perikaryon. The protein resides in the cell projection. Its subcellular location is the axon. Transcription factor that binds to DNA at the consensus sequence 5'-CAG[GC]TG-3'. Positively regulates the determination of retinal ganglion cell fate and formation of the optic nerve and retino-hypothalamic tract. Required for retinal circadian rhythm photoentrainment. Plays a role in brainstem auditory signaling and binaural processing. Regulates the differentiation of olfactory receptor neurons. During retinal neurogenesis, activates the transcription of several genes such as brn3d, coe3, cbfa2t2, glis2, elrC and xgadd45-gamma. This is Transcription factor Atoh7-b from Xenopus laevis (African clawed frog).